Reading from the N-terminus, the 146-residue chain is 3-dehydroquinate dehydratase (146 aa).

The Proton acceptor role is filled by Tyr-23. 3 residues coordinate substrate: Asn-75, His-81, and Asp-88. His-101 serves as the catalytic Proton donor. Substrate is bound by residues Leu-102–Ser-103 and Arg-112.

The protein belongs to the type-II 3-dehydroquinase family. As to quaternary structure, homododecamer.

The enzyme catalyses 3-dehydroquinate = 3-dehydroshikimate + H2O. It functions in the pathway metabolic intermediate biosynthesis; chorismate biosynthesis; chorismate from D-erythrose 4-phosphate and phosphoenolpyruvate: step 3/7. Catalyzes a trans-dehydration via an enolate intermediate. The polypeptide is 3-dehydroquinate dehydratase (Marinobacter nauticus (strain ATCC 700491 / DSM 11845 / VT8) (Marinobacter aquaeolei)).